The chain runs to 160 residues: uncharacterized protein (160 aa).

The 139-residue stretch at 2 to 140 folds into the N-acetyltransferase domain; it reads MIIIPNNEIA…KARRLKPEIP (139 aa).

This is an uncharacterized protein from Bacillus subtilis (strain 168).